A 198-amino-acid polypeptide reads, in one-letter code: Linker for activation of T-cells family member 2 (198 aa).

The Extracellular segment spans residues 1–4; sequence MAQP. A helical; Signal-anchor for type III membrane protein membrane pass occupies residues 5–24; the sequence is ELLWAAAGLMLLGVAVSACV. 2 S-palmitoyl cysteine lipidation sites follow: Cys23 and Cys26. Over 25–198 the chain is Cytoplasmic; the sequence is RCQLYATKRG…PTIDAVVLSK (174 aa). A phosphotyrosine mark is found at Tyr136, Tyr155, and Tyr184.

When phosphorylated, interacts with GRB2. In terms of processing, phosphorylated on tyrosines following cross-linking of BCR; which induces the recruitment of GRB2.

The protein localises to the cell membrane. Involved in BCR (B-cell antigen receptor)-mediated signaling in B-cells. May also be involved in FCER1 (high affinity immunoglobulin epsilon receptor)-mediated signaling in mast cells and FCGR1 (high affinity immunoglobulin gamma Fc receptor I)-mediated signaling in myeloid cells. Couples activation of these receptors and their associated kinases with distal intracellular events such as calcium mobilization through the recruitment of GRB2. The chain is Linker for activation of T-cells family member 2 (LAT2) from Gallus gallus (Chicken).